We begin with the raw amino-acid sequence, 323 residues long: tRNA U34 carboxymethyltransferase (323 aa).

Carboxy-S-adenosyl-L-methionine is bound by residues K91, W105, K110, G130, 152-154, 181-182, M196, Y200, and R315; these read DPT and IE.

This sequence belongs to the class I-like SAM-binding methyltransferase superfamily. CmoB family. As to quaternary structure, homotetramer.

It carries out the reaction carboxy-S-adenosyl-L-methionine + 5-hydroxyuridine(34) in tRNA = 5-carboxymethoxyuridine(34) in tRNA + S-adenosyl-L-homocysteine + H(+). Its function is as follows. Catalyzes carboxymethyl transfer from carboxy-S-adenosyl-L-methionine (Cx-SAM) to 5-hydroxyuridine (ho5U) to form 5-carboxymethoxyuridine (cmo5U) at position 34 in tRNAs. The polypeptide is tRNA U34 carboxymethyltransferase (Salmonella arizonae (strain ATCC BAA-731 / CDC346-86 / RSK2980)).